The sequence spans 295 residues: CCAAT-binding factor complex subunit php4 (295 aa).

The span at 1-19 (MESSKSPSEVEKSSSASPA) shows a compositional bias: low complexity. The disordered stretch occupies residues 1–69 (MESSKSPSEV…GPTSALSVEE (69 aa)). Positions 73 to 111 (RVREKQYQDTIGKLQKENNELLEQLEMLQAQLKNSTLDS) form a coiled coil. Positions 93–100 (LLEQLEML) match the Nuclear export signal motif. Positions 108–130 (TLDSPKEVEVNSEVVKPDSATTE) are disordered.

As to quaternary structure, component of tha CCAAT-binding complex composed of at least php2, php3, php4 and php5. Interacts with crm1 and grx4.

The protein resides in the cytoplasm. It localises to the nucleus. Its subcellular location is the cytoskeleton. The protein localises to the spindle pole. Functionally, component of the transcription regulatory CCAAT-binding complex. Required for the reprogramming of the cell for iron use. Down-regulates pcl1, sdh4, and isa1 underlow-iron conditions. The polypeptide is CCAAT-binding factor complex subunit php4 (php4) (Schizosaccharomyces pombe (strain 972 / ATCC 24843) (Fission yeast)).